The chain runs to 415 residues: Queuine tRNA-ribosyltransferase accessory subunit 2 (415 aa).

4 residues coordinate Zn(2+): cysteine 351, cysteine 353, cysteine 356, and histidine 382.

It belongs to the queuine tRNA-ribosyltransferase family. QTRT2 subfamily. Heterodimer of a catalytic subunit QTRT1 and an accessory subunit QTRT2. It depends on Zn(2+) as a cofactor.

It is found in the cytoplasm. It localises to the mitochondrion outer membrane. Functionally, non-catalytic subunit of the queuine tRNA-ribosyltransferase (TGT) that catalyzes the base-exchange of a guanine (G) residue with queuine (Q) at position 34 (anticodon wobble position) in tRNAs with GU(N) anticodons (tRNA-Asp, -Asn, -His and -Tyr), resulting in the hypermodified nucleoside queuosine (7-(((4,5-cis-dihydroxy-2-cyclopenten-1-yl)amino)methyl)-7-deazaguanosine). The polypeptide is Queuine tRNA-ribosyltransferase accessory subunit 2 (Pongo abelii (Sumatran orangutan)).